A 108-amino-acid polypeptide reads, in one-letter code: Large ribosomal subunit protein uL23 (108 aa).

It belongs to the universal ribosomal protein uL23 family. In terms of assembly, part of the 50S ribosomal subunit. Contacts protein L29, and trigger factor when it is bound to the ribosome.

Functionally, one of the early assembly proteins it binds 23S rRNA. One of the proteins that surrounds the polypeptide exit tunnel on the outside of the ribosome. Forms the main docking site for trigger factor binding to the ribosome. The polypeptide is Large ribosomal subunit protein uL23 (Albidiferax ferrireducens (strain ATCC BAA-621 / DSM 15236 / T118) (Rhodoferax ferrireducens)).